The following is a 515-amino-acid chain: 2-isopropylmalate synthase (515 aa).

One can recognise a Pyruvate carboxyltransferase domain in the interval 5–268; that stretch reads VIIFDTTLRD…VCGIDATQIV (264 aa). Mn(2+)-binding residues include D14, H202, H204, and N239. The segment at 394-515 is regulatory domain; the sequence is KFISLSQHSE…QAKLNAQMTP (122 aa).

The protein belongs to the alpha-IPM synthase/homocitrate synthase family. LeuA type 1 subfamily. In terms of assembly, homodimer. Mn(2+) is required as a cofactor.

It localises to the cytoplasm. The enzyme catalyses 3-methyl-2-oxobutanoate + acetyl-CoA + H2O = (2S)-2-isopropylmalate + CoA + H(+). It participates in amino-acid biosynthesis; L-leucine biosynthesis; L-leucine from 3-methyl-2-oxobutanoate: step 1/4. Its function is as follows. Catalyzes the condensation of the acetyl group of acetyl-CoA with 3-methyl-2-oxobutanoate (2-ketoisovalerate) to form 3-carboxy-3-hydroxy-4-methylpentanoate (2-isopropylmalate). The chain is 2-isopropylmalate synthase from Polynucleobacter necessarius subsp. necessarius (strain STIR1).